The chain runs to 245 residues: Probable phosphatase NT01EI_1577 (245 aa).

H7, H9, H15, H40, E73, H101, H131, D192, and H194 together coordinate Zn(2+).

This sequence belongs to the PHP family. In terms of assembly, homotrimer. Zn(2+) serves as cofactor.

The chain is Probable phosphatase NT01EI_1577 from Edwardsiella ictaluri (strain 93-146).